The sequence spans 77 residues: uncharacterized protein (77 aa).

The next 2 helical transmembrane spans lie at 3 to 23 and 35 to 55; these read FNFI…SFLF and IGAI…VALL.

It is found in the cell membrane. This is an uncharacterized protein from Haemophilus influenzae (strain ATCC 51907 / DSM 11121 / KW20 / Rd).